The following is a 243-amino-acid chain: Large ribosomal subunit protein uL2 (243 aa).

Disordered regions lie at residues 1–23 (MGKRIRPQRLGRGGPTYRAPSHR) and 204–243 (PFGGGNHQSPGKPTTIARGDPPGRKVGHIAARKTGRGGRR). The segment covering 228-243 (KVGHIAARKTGRGGRR) has biased composition (basic residues).

It belongs to the universal ribosomal protein uL2 family. In terms of assembly, part of the 50S ribosomal subunit. Forms a bridge to the 30S subunit in the 70S ribosome.

Functionally, one of the primary rRNA binding proteins. Required for association of the 30S and 50S subunits to form the 70S ribosome, for tRNA binding and peptide bond formation. It has been suggested to have peptidyltransferase activity; this is somewhat controversial. Makes several contacts with the 16S rRNA in the 70S ribosome. The polypeptide is Large ribosomal subunit protein uL2 (Methanopyrus kandleri (strain AV19 / DSM 6324 / JCM 9639 / NBRC 100938)).